The sequence spans 309 residues: Probable lipid kinase YegS-like (309 aa).

The 134-residue stretch at 1–134 (MTTPRWRLIL…IDLLRVDADG (134 aa)) folds into the DAGKc domain. Residues Thr-39, 65–71 (GDGTLSA), and Thr-96 each bind ATP. Residues Leu-219, Asp-222, and Leu-224 each coordinate Mg(2+). The Proton acceptor role is filled by Glu-280.

Belongs to the diacylglycerol/lipid kinase family. YegS lipid kinase subfamily. Mg(2+) is required as a cofactor. The cofactor is Ca(2+).

The protein localises to the cytoplasm. In terms of biological role, probably phosphorylates lipids; the in vivo substrate is unknown. This is Probable lipid kinase YegS-like from Stenotrophomonas maltophilia (strain K279a).